The sequence spans 271 residues: Cyclic AMP-dependent transcription factor ATF-1 (271 aa).

The interval 1–61 is disordered; that stretch reads MEDSHKSTTS…QKAHGILARR (61 aa). A KID domain is found at 31-90; that stretch reads QVSSLSESEESQDSSDSIGSSQKAHGILARRPSYRKILKDLSSEDTRGRKGDGENSGVSA. S63 is subject to Phosphoserine; by CaMK1, CDK3, RPS6KA4 and RPS6KA5. S198 is modified (phosphoserine; by HIPK2). Residues K208 and K215 each participate in a glycyl lysine isopeptide (Lys-Gly) (interchain with G-Cter in SUMO2) cross-link. One can recognise a bZIP domain in the interval 213 to 271; the sequence is QLKREIRLMKNREAARECRRKKKEYVKCLENRVAVLENQNKTLIEELKTLKDLYSNKSV. Residues 215 to 239 are basic motif; it reads KREIRLMKNREAARECRRKKKEYVK. A leucine-zipper region spans residues 241–262; sequence LENRVAVLENQNKTLIEELKTL.

Belongs to the bZIP family. ATF subfamily. In terms of assembly, binds DNA as a dimer. Interacts with HIPK2 and CDK3. Interacts with MOTS-c, a peptide produced by the mitochondrially encoded 12S rRNA MT-RNR1; the interaction occurs in the nucleus following metabolic stress. Phosphorylated at Ser-198 by HIPK2 in response to genotoxic stress. This phosphorylation promotes transcription repression of FTH1 and other antioxidant detoxification genes. The CDK3-mediated phosphorylation at Ser-63 promotes its transactivation and transcriptional activities. Phosphorylated at Ser-63 by RPS6KA4 and RPS6KA5 in response to mitogenic or stress stimuli.

The protein resides in the nucleus. Functionally, this protein binds the cAMP response element (CRE) (consensus: 5'-GTGACGT[AC][AG]-3'), a sequence present in many viral and cellular promoters. Binds to the Tax-responsive element (TRE) of HTLV-I. Mediates PKA-induced stimulation of CRE-reporter genes. Represses the expression of FTH1 and other antioxidant detoxification genes. Triggers cell proliferation and transformation. The protein is Cyclic AMP-dependent transcription factor ATF-1 (ATF1) of Homo sapiens (Human).